The following is an 839-amino-acid chain: DNA (cytosine-5)-methyltransferase CMT3 (839 aa).

Disordered stretches follow at residues 1-38 and 51-86; these read MAPK…EPVT and LDEP…KTKD. Residues 19–30 show a composition bias toward basic residues; that stretch reads PKPKKRAPKRAK. Basic and acidic residues predominate over residues 51-70; the sequence is LDEPIPESEAKSTWPDRYKP. One can recognise a BAH domain in the interval 108 to 227; that stretch reads QIYELNDDAY…LPYDTFEAIQ (120 aa). One can recognise an SAM-dependent MTase C5-type domain in the interval 269 to 813; sequence ATLLDLYSGC…YALGTAFQGL (545 aa). Residues 382–447 form the Chromo domain; sequence FTVDKIVGIS…LGYKSGILPL (66 aa). Cys460 is a catalytic residue.

Belongs to the class I-like SAM-binding methyltransferase superfamily. C5-methyltransferase family. In terms of assembly, homodimer. Interacts with HP1 and, through its chromodomain, with the N-terminal tail of histone H3 doubly methylated at 'Lys-9' and 'Lys-27'. Binds to JMJ24. Post-translationally, ubiquitinated by JMJ24, subsequently beingargeted to proteasomal degradation thus initiating the destabilization of the heterochromatic state of endogenous silenced loci.

It is found in the nucleus. It catalyses the reaction a 2'-deoxycytidine in DNA + S-adenosyl-L-methionine = a 5-methyl-2'-deoxycytidine in DNA + S-adenosyl-L-homocysteine + H(+). Involved in the CpXpG methylation (e.g. CHG cytosine) and in gene silencing. Methylates preferentially transposon-related sequences. Functionally redundant to DRM1/DRM2 to maintain non-CpG methylation. Involved in RNA-directed DNA methylation. The chain is DNA (cytosine-5)-methyltransferase CMT3 from Arabidopsis thaliana (Mouse-ear cress).